The following is a 154-amino-acid chain: Interleukin-2 (154 aa).

An N-terminal signal peptide occupies residues 1 to 20; sequence MYKMQLLCCIALTLALMANG. O-linked (GalNAc...) threonine glycosylation is present at Thr23. Cys78 and Cys126 are joined by a disulfide.

This sequence belongs to the IL-2 family.

It is found in the secreted. Functionally, cytokine produced by activated CD4-positive helper T-cells and to a lesser extend activated CD8-positive T-cells and natural killer (NK) cells that plays pivotal roles in the immune response and tolerance. Binds to a receptor complex composed of either the high-affinity trimeric IL-2R (IL2RA/CD25, IL2RB/CD122 and IL2RG/CD132) or the low-affinity dimeric IL-2R (IL2RB and IL2RG). Interaction with the receptor leads to oligomerization and conformation changes in the IL-2R subunits resulting in downstream signaling starting with phosphorylation of JAK1 and JAK3. In turn, JAK1 and JAK3 phosphorylate the receptor to form a docking site leading to the phosphorylation of several substrates including STAT5. This process leads to activation of several pathways including STAT, phosphoinositide-3-kinase/PI3K and mitogen-activated protein kinase/MAPK pathways. Functions as a T-cell growth factor and can increase NK-cell cytolytic activity as well. Promotes strong proliferation of activated B-cells and subsequently immunoglobulin production. Plays a pivotal role in regulating the adaptive immune system by controlling the survival and proliferation of regulatory T-cells, which are required for the maintenance of immune tolerance. Moreover, participates in the differentiation and homeostasis of effector T-cell subsets, including Th1, Th2, Th17 as well as memory CD8-positive T-cells. The chain is Interleukin-2 (IL2) from Sus scrofa (Pig).